A 327-amino-acid chain; its full sequence is Thiamine-binding periplasmic protein (327 aa).

Residues 1–18 form the signal peptide; the sequence is MLKKCLPLLLLCTAPVFA. Thiamine-binding positions include 59–60, 161–162, Trp-197, and 215–218; these read DG, ST, and YTTS.

This sequence belongs to the bacterial solute-binding protein 1 family. In terms of assembly, monomer in solution. The complex is composed of two ATP-binding proteins (ThiQ), two transmembrane proteins (ThiP) and a solute-binding protein (ThiB).

It is found in the periplasm. With respect to regulation, transport is inhibited by the sulfhydryl-specific modifier N-ethylmaleimide. Functionally, part of the ABC transporter complex ThiBPQ involved in thiamine import. Binds thiamine, thiamine phosphate and thiamine diphosphate with high affinity. The chain is Thiamine-binding periplasmic protein (thiB) from Escherichia coli (strain K12).